The chain runs to 759 residues: Subtilisin-like protease SBT3.16 (759 aa).

Positions 1 to 33 (MELSSLIVPNNKKHFVVVFIGLVLIFKIALITA) are cleaved as a signal peptide. A propeptide spans 34 to 119 (ANEKSQIYTV…VTRSKNMKLK (86 aa)) (activation peptide). An Inhibitor I9 domain is found at 41 to 118 (YTVHLGERQH…RVTRSKNMKL (78 aa)). Positions 124 to 608 (SDYLGLTSAA…GGLVNPVKVA (485 aa)) constitute a Peptidase S8 domain. The active-site Charge relay system is the aspartate 153. Residues asparagine 186 and asparagine 209 are each glycosylated (N-linked (GlcNAc...) asparagine). The active-site Charge relay system is histidine 229. N-linked (GlcNAc...) asparagine glycosylation occurs at asparagine 371. Serine 539 (charge relay system) is an active-site residue. N-linked (GlcNAc...) asparagine glycosylation is found at asparagine 632 and asparagine 711.

This sequence belongs to the peptidase S8 family.

It is found in the secreted. The chain is Subtilisin-like protease SBT3.16 from Arabidopsis thaliana (Mouse-ear cress).